The sequence spans 890 residues: Leucine--tRNA ligase (890 aa).

The short motif at 48–58 (PYPSGKLHMGH) is the 'HIGH' region element. A 'KMSKS' region motif is present at residues 645–649 (KMSKS). An ATP-binding site is contributed by K648.

The protein belongs to the class-I aminoacyl-tRNA synthetase family.

It localises to the cytoplasm. It carries out the reaction tRNA(Leu) + L-leucine + ATP = L-leucyl-tRNA(Leu) + AMP + diphosphate. This Polynucleobacter necessarius subsp. necessarius (strain STIR1) protein is Leucine--tRNA ligase.